The following is a 125-amino-acid chain: Glycine cleavage system H protein (125 aa).

Positions S22–E104 constitute a Lipoyl-binding domain. The residue at position 63 (K63) is an N6-lipoyllysine.

Belongs to the GcvH family. In terms of assembly, the glycine cleavage system is composed of four proteins: P, T, L and H. Requires (R)-lipoate as cofactor.

In terms of biological role, the glycine cleavage system catalyzes the degradation of glycine. The H protein shuttles the methylamine group of glycine from the P protein to the T protein. Its function is as follows. Is also involved in protein lipoylation via its role as an octanoyl/lipoyl carrier protein intermediate. This chain is Glycine cleavage system H protein, found in Listeria monocytogenes serotype 4a (strain HCC23).